Reading from the N-terminus, the 257-residue chain is Discoidin-2 (257 aa).

Positions 1–155 (MSVPAGSVSC…SLRWELYALP (155 aa)) are beta-sandwich. In terms of domain architecture, F5/8 type C spans 10–154 (CLANALLNLR…ISLRWELYAL (145 aa)). Ca(2+) is bound by residues Asn-39, Ser-40, and Asp-47. The Cell attachment site signature appears at 81–83 (RGD). His-84 is modified (phosphohistidine). Residues 156–162 (VKSYSNP) are linker. Residues 163–257 (SVQVGEVSIG…FDYVAVEFNN (95 aa)) are lectin-like. Asp-209, Arg-218, and Trp-238 together coordinate a carbohydrate.

Homotrimer. The N-terminus is blocked. As to expression, maturing spore cells.

Galactose-binding lectin. May be necessary for the primary process of spore formation and may be involved in spore coat formation. This is Discoidin-2 (dscE) from Dictyostelium discoideum (Social amoeba).